The following is a 194-amino-acid chain: Ribosomal RNA large subunit methyltransferase E (194 aa).

5 residues coordinate S-adenosyl-L-methionine: glycine 48, tryptophan 50, aspartate 66, asparagine 82, and aspartate 110. Residue lysine 150 is the Proton acceptor of the active site.

This sequence belongs to the class I-like SAM-binding methyltransferase superfamily. RNA methyltransferase RlmE family.

Its subcellular location is the cytoplasm. The enzyme catalyses uridine(2552) in 23S rRNA + S-adenosyl-L-methionine = 2'-O-methyluridine(2552) in 23S rRNA + S-adenosyl-L-homocysteine + H(+). Its function is as follows. Specifically methylates the uridine in position 2552 of 23S rRNA at the 2'-O position of the ribose in the fully assembled 50S ribosomal subunit. The protein is Ribosomal RNA large subunit methyltransferase E of Picrophilus torridus (strain ATCC 700027 / DSM 9790 / JCM 10055 / NBRC 100828 / KAW 2/3).